A 222-amino-acid chain; its full sequence is uncharacterized protein (222 aa).

Belongs to the PhoU family.

It is found in the cytoplasm. Its function is as follows. Not known; probably involved in phosphate transport and/or metabolism. This is an uncharacterized protein from Deinococcus radiodurans (strain ATCC 13939 / DSM 20539 / JCM 16871 / CCUG 27074 / LMG 4051 / NBRC 15346 / NCIMB 9279 / VKM B-1422 / R1).